Reading from the N-terminus, the 305-residue chain is Aspartate carbamoyltransferase catalytic subunit (305 aa).

Carbamoyl phosphate-binding residues include Arg-52 and Thr-53. Lys-80 is a binding site for L-aspartate. Carbamoyl phosphate-binding residues include Arg-102, His-132, and Gln-135. The L-aspartate site is built by Arg-165 and Arg-217. Carbamoyl phosphate-binding residues include Ala-258 and Pro-259.

The protein belongs to the aspartate/ornithine carbamoyltransferase superfamily. ATCase family. In terms of assembly, heterododecamer (2C3:3R2) of six catalytic PyrB chains organized as two trimers (C3), and six regulatory PyrI chains organized as three dimers (R2).

The enzyme catalyses carbamoyl phosphate + L-aspartate = N-carbamoyl-L-aspartate + phosphate + H(+). It participates in pyrimidine metabolism; UMP biosynthesis via de novo pathway; (S)-dihydroorotate from bicarbonate: step 2/3. Functionally, catalyzes the condensation of carbamoyl phosphate and aspartate to form carbamoyl aspartate and inorganic phosphate, the committed step in the de novo pyrimidine nucleotide biosynthesis pathway. In Latilactobacillus sakei subsp. sakei (strain 23K) (Lactobacillus sakei subsp. sakei), this protein is Aspartate carbamoyltransferase catalytic subunit.